Consider the following 107-residue polypeptide: Translation initiation factor IF-1, chloroplastic (107 aa).

The 76-residue stretch at 8 to 83 folds into the S1-like domain; the sequence is REKKNPREAK…SKGRIIYRLP (76 aa). The segment at 81 to 107 is disordered; that stretch reads RLPHKDSKRTEDSKDTEDLKDTKDSKG. Positions 83-107 are enriched in basic and acidic residues; it reads PHKDSKRTEDSKDTEDLKDTKDSKG.

This sequence belongs to the IF-1 family. Component of the 30S ribosomal translation pre-initiation complex which assembles on the 30S ribosome in the order IF-2 and IF-3, IF-1 and N-formylmethionyl-tRNA(fMet); mRNA recruitment can occur at any time during PIC assembly.

It is found in the plastid. It localises to the chloroplast. In terms of biological role, one of the essential components for the initiation of protein synthesis. Stabilizes the binding of IF-2 and IF-3 on the 30S subunit to which N-formylmethionyl-tRNA(fMet) subsequently binds. Helps modulate mRNA selection, yielding the 30S pre-initiation complex (PIC). Upon addition of the 50S ribosomal subunit IF-1, IF-2 and IF-3 are released leaving the mature 70S translation initiation complex. In Oryza sativa subsp. indica (Rice), this protein is Translation initiation factor IF-1, chloroplastic.